The chain runs to 66 residues: Phylloseptin-S1 (66 aa).

The first 22 residues, 1-22 (MAFLKKSLFLVLFLGLVSLSIC), serve as a signal peptide directing secretion. Positions 23–46 (EEEKRETEEEEHDQEEDDKSEEKR) are excised as a propeptide. A disordered region spans residues 25–44 (EKRETEEEEHDQEEDDKSEE). Positions 30–41 (EEEEHDQEEDDK) are enriched in acidic residues. A Phenylalanine amide modification is found at Phe65.

As to expression, expressed by the skin glands.

The protein resides in the secreted. Its subcellular location is the target cell membrane. Functionally, antimicrobial peptide with high activity against Gram-positive bacteria, low activity against Gram-negative bacteria, and moderate activity against fungi. Acts on bacterial biofilms (S.aureus) with the same potency than on bacteria. Acts by causing bacterial membrane disruption inducing leakage of the intracellular content followed by cell death. It adopts an alpha-helical amphipathic structure in membrane environments. Also shows highly potent antiparasitic activity against Leishmania species. Shows low hemolytic activity on horse and human erythrocytes (LC(50)=39 uM). Is also active on human monocytes (IC(50)=23 uM). This chain is Phylloseptin-S1, found in Phyllomedusa sauvagei (Sauvage's leaf frog).